Consider the following 238-residue polypeptide: Probable transcriptional regulatory protein SSU05_0402 (238 aa).

This sequence belongs to the TACO1 family. YeeN subfamily.

It is found in the cytoplasm. The polypeptide is Probable transcriptional regulatory protein SSU05_0402 (Streptococcus suis (strain 05ZYH33)).